Consider the following 266-residue polypeptide: HLA class II histocompatibility antigen, DRB1 beta chain (266 aa).

An N-terminal signal peptide occupies residues 1 to 29 (MVCLKLPGGSCMTALTVTLMVLSSPLALS). Residues 30-124 (GDTRPRFLWQ…VESFTVQRRV (95 aa)) form a beta-1 region. The Extracellular portion of the chain corresponds to 30–227 (GDTRPRFLWQ…RARSESAQSK (198 aa)). Cys-44 and Cys-108 are oxidised to a cystine. N-linked (GlcNAc...) asparagine glycosylation is present at Asn-48. A peptide antigen-binding residues include Asp-86, Trp-90, His-110, Asn-111, and Arg-122. The tract at residues 125 to 227 (QPKVTVYPSK…RARSESAQSK (103 aa)) is beta-2. One can recognise an Ig-like C1-type domain in the interval 126–214 (PKVTVYPSKT…EHPSVTSPLT (89 aa)). The cysteines at positions 146 and 202 are disulfide-linked. A helical transmembrane segment spans residues 228–248 (MLSGVGGFVLGLLFLGAGLFI). Over 249–266 (YFRNQKGHSGLQPTGFLS) the chain is Cytoplasmic. A Glycyl lysine isopeptide (Lys-Gly) (interchain with G-Cter in ubiquitin) cross-link involves residue Lys-254.

Heterotrimer that consists of an alpha chain HLA-DRA, a beta chain HLA-DRB1 and a peptide (peptide-MHCII). Newly synthesized alpha and beta chains forms a heterodimer (MHCII) that associates with the CD74/invariant chain (Ii) in the endoplasmic reticulum (ER). Ii is a trimer composed of three subunits and each subunit interacts with one MHCII dimer, blocking the peptide-binding cleft. As a result, MHCII molecules cannot bind peptides present in the ER. The complex of MHCII and CD74/Ii is transported in vesicles from ER to Golgi to lysosomes, where it encounters antigenic peptides generated via proteolysis of endocytosed antigens. MHCII dimers are dissociated from CD74/Ii by the combined action of proteolysis and HLA-DM. Lysosomal enzymes such as cathepsin, degrade CD74/Ii leaving a 24 amino acid remnant called class II-associated Ii or CLIP. Interacts (via the peptide binding cleft) with CLIP; this interaction inhibits antigen peptide binding before entry in the endosomal compartment. The displacement of CLIP and replacement by a high affinity peptide in lysosomes is performed by HLA-DM heterodimer. HLA-DM catalyzes CLIP dissociation from MHCII, stabilizes empty MHCII and mediates the selection of high affinity peptides. Interacts with HLA-DM heterodimer; this interaction is direct. Interacts with TCR (via CDR3). Interacts (via beta-2 domain) with CD4 coreceptor (via Ig-like V-type domain); this interaction is of exceptionally low affinity yet necessary for optimal recognition of antigenic peptides. In terms of assembly, (Microbial infection) Interacts with Staphylococcus aureus enterotoxin A/entA, enterotoxin B/entB, enterotoxin C1/entC1, enterotoxin D/entD and enterotoxin H/entH. Enterotoxins bind outside the peptide-binding cleft of MHCII: enterotoxin H/entH interacts via the beta-1 domain of MHCII and in a zinc-dependent way, whereas enterotoxin B/entB interacts primarily via the alpha-1 domain. As to quaternary structure, (Microbial infection) Interacts with Epstein-Barr virus gp42 protein. In terms of processing, ubiquitinated by MARCHF1 and MARCHF8 at Lys-254 leading to sorting into the endosome system and down-regulation of MHCII. As to expression, expressed in professional APCs: monocyte/macrophages, dendritic cells and B cells (at protein level). Expressed in thymic epithelial cells (at protein level).

The protein localises to the cell membrane. Its subcellular location is the endoplasmic reticulum membrane. The protein resides in the lysosome membrane. It is found in the late endosome membrane. It localises to the autolysosome membrane. A beta chain of antigen-presenting major histocompatibility complex class II (MHCII) molecule. In complex with the alpha chain HLA-DRA, displays antigenic peptides on professional antigen presenting cells (APCs) for recognition by alpha-beta T cell receptor (TCR) on HLA-DRB1-restricted CD4-positive T cells. This guides antigen-specific T-helper effector functions, both antibody-mediated immune response and macrophage activation, to ultimately eliminate the infectious agents and transformed cells. Typically presents extracellular peptide antigens of 10 to 30 amino acids that arise from proteolysis of endocytosed antigens in lysosomes. In the tumor microenvironment, presents antigenic peptides that are primarily generated in tumor-resident APCs likely via phagocytosis of apoptotic tumor cells or macropinocytosis of secreted tumor proteins. Presents peptides derived from intracellular proteins that are trapped in autolysosomes after macroautophagy, a mechanism especially relevant for T cell selection in the thymus and central immune tolerance. The selection of the immunodominant epitopes follows two processing modes: 'bind first, cut/trim later' for pathogen-derived antigenic peptides and 'cut first, bind later' for autoantigens/self-peptides. The anchor residue at position 1 of the peptide N-terminus, usually a large hydrophobic residue, is essential for high affinity interaction with MHCII molecules. In terms of biological role, allele DRB1*01:01: Displays an immunodominant epitope derived from Bacillus anthracis pagA/protective antigen, PA (KLPLYISNPNYKVNVYAVT), to both naive and PA-specific memory CD4-positive T cells. Presents immunodominant HIV-1 gag peptide (FRDYVDRFYKTLRAEQASQE) on infected dendritic cells for recognition by TRAV24-TRBV2 TCR on CD4-positive T cells and controls viral load. May present to T-helper 1 cells several HRV-16 epitopes derived from capsid proteins VP1 (PRFSLPFLSIASAYYMFYDG) and VP2 (PHQFINLRSNNSATLIVPYV), contributing to viral clearance. Displays commonly recognized peptides derived from IAV external protein HA (PKYVKQNTLKLAT and SNGNFIAPEYAYKIVK) and from internal proteins M, NP and PB1, with M-derived epitope (GLIYNRMGAVTTEV) being the most immunogenic. Presents a self-peptide derived from COL4A3 (GWISLWKGFSF) to TCR (TRAV14 biased) on CD4-positive, FOXP3-positive regulatory T cells and mediates immune tolerance to self. May present peptides derived from oncofetal trophoblast glycoprotein TPBG 5T4, known to be recognized by both T-helper 1 and regulatory T cells. Displays with low affinity a self-peptide derived from MBP (VHFFKNIVTPRTP). Its function is as follows. Allele DRB1*03:01: May present to T-helper 1 cells an HRV-16 epitope derived from capsid protein VP2 (NEKQPSDDNWLNFDGTLLGN), contributing to viral clearance. Displays self-peptides derived from retinal SAG (NRERRGIALDGKIKHE) and thyroid TG (LSSVVVDPSIRHFDV). Presents viral epitopes derived from HHV-6B gH/U48 and U85 antigens to polyfunctional CD4-positive T cells with cytotoxic activity implicated in control of HHV-6B infection. Presents several immunogenic epitopes derived from C.tetani neurotoxin tetX, playing a role in immune recognition and long-term protection. Functionally, allele DRB1*04:01: Presents an immunodominant bacterial epitope derived from M.tuberculosis esxB/culture filtrate antigen CFP-10 (EISTNIRQAGVQYSR), eliciting CD4-positive T cell effector functions such as IFNG production and cytotoxic activity. May present to T-helper 1 cells an HRV-16 epitope derived from capsid protein VP2 (NEKQPSDDNWLNFDGTLLGN), contributing to viral clearance. Presents tumor epitopes derived from melanoma-associated TYR antigen (QNILLSNAPLGPQFP and DYSYLQDSDPDSFQD), triggering CD4-positive T cell effector functions such as GMCSF production. Displays preferentially citrullinated self-peptides derived from VIM (GVYATR/citSSAVR and SAVRAR/citSSVPGVR) and ACAN (VVLLVATEGR/ CitVRVNSAYQDK). Displays self-peptides derived from COL2A1. Allele DRB1*04:02: Displays native or citrullinated self-peptides derived from VIM. In terms of biological role, allele DRB1*04:04: May present to T-helper 1 cells several HRV-16 epitopes derived from capsid proteins VP1 (HIVMQYMYVPPGAPIPTTRN) and VP2 (RGDSTITSQDVANAVVGYGV), contributing to viral clearance. Displays preferentially citrullinated self-peptides derived from VIM (SAVRAR/citSSVPGVR). Its function is as follows. Allele DRB1*04:05: May present to T-helper 1 cells an immunogenic epitope derived from tumor-associated antigen WT1 (KRYFKLSHLQMHSRKH), likely providing for effective antitumor immunity in a wide range of solid and hematological malignancies. Functionally, allele DRB1*05:01: Presents an immunodominant HIV-1 gag peptide (FRDYVDRFYKTLRAEQASQE) on infected dendritic cells for recognition by TRAV24-TRBV2 TCR on CD4-positive T cells and controls viral load. Allele DRB1*07:01: Upon EBV infection, presents latent antigen EBNA2 peptide (PRSPTVFYNIPPMPLPPSQL) to CD4-positive T cells, driving oligoclonal expansion and selection of a dominant virus-specific memory T cell subset with cytotoxic potential to directly eliminate virus-infected B cells. May present to T-helper 1 cells several HRV-16 epitopes derived from capsid proteins VP1 (PRFSLPFLSIASAYYMFYDG) and VP2 (VPYVNAVPMDSMVRHNNWSL), contributing to viral clearance. In the context of tumor immunesurveillance, may present to T-helper 1 cells an immunogenic epitope derived from tumor-associated antigen WT1 (MTEYKLVVVGAVGVGKSALTIQLI), likely providing for effective antitumor immunity in a wide range of solid and hematological malignancies. In metastatic epithelial tumors, presents to intratumoral CD4-positive T cells a KRAS neoantigen (MTEYKLVVVGAVGVGKSALTIQLI) carrying G12V hotspot driver mutation and may mediate tumor regression. In terms of biological role, allele DRB1*11:01: Displays an immunodominant HIV-1 gag peptide (FRDYVDRFYKTLRAEQASQE) on infected dendritic cells for recognition by TRAV24-TRBV2 TCR on CD4-positive T cells and controls viral load. May present to T-helper 1 cells an HRV-16 epitope derived from capsid protein VP2 (SDRIIQITRGDSTITSQDVA), contributing to viral clearance. Presents several immunogenic epitopes derived from C.tetani neurotoxin tetX, playing a role in immune recognition and longterm protection. In the context of tumor immunesurveillance, may present tumor-derived neoantigens to CD4-positive T cells and trigger anti-tumor helper functions. Its function is as follows. Allele DRB1*13:01: Presents viral epitopes derived from HHV-6B antigens to polyfunctional CD4-positive T cells implicated in control of HHV-6B infection. Functionally, allele DRB1*15:01: May present to T-helper 1 cells an HRV-16 epitope derived from capsid protein VP2 (SNNSATLIVPYVNAVPMDSM), contributing to viral clearance. Displays a self-peptide derived from MBP (ENPVVHFFKNIVTPR). May present to T-helper 1 cells an immunogenic epitope derived from tumor-associated antigen WT1 (KRYFKLSHLQMHSRKH), likely providing for effective antitumor immunity in a wide range of solid and hematological malignancies. Allele DRB1*15:02: Displays an immunodominant HIV-1 gag peptide (FRDYVDRFYKTLRAEQASQE) on infected dendritic cells for recognition by TRAV24-TRBV2 TCR on CD4-positive T cells and controls viral load. May present to T-helper 1 cells an immunogenic epitope derived from tumor-associated antigen WT1 (KRYFKLSHLQMHSRKH), likely providing for effective antitumor immunity in a wide range of solid and hematological malignancies. In terms of biological role, (Microbial infection) Acts as a receptor for Epstein-Barr virus on lymphocytes. The sequence is that of HLA class II histocompatibility antigen, DRB1 beta chain from Homo sapiens (Human).